The sequence spans 122 residues: Large ribosomal subunit protein uL14 (122 aa).

It belongs to the universal ribosomal protein uL14 family. As to quaternary structure, part of the 50S ribosomal subunit. Forms a cluster with proteins L3 and L19. In the 70S ribosome, L14 and L19 interact and together make contacts with the 16S rRNA in bridges B5 and B8.

Its function is as follows. Binds to 23S rRNA. Forms part of two intersubunit bridges in the 70S ribosome. This Colwellia psychrerythraea (strain 34H / ATCC BAA-681) (Vibrio psychroerythus) protein is Large ribosomal subunit protein uL14.